The following is a 151-amino-acid chain: High mobility group B protein 14 (151 aa).

Disordered regions lie at residues 1 to 62 (MTKR…QTKM) and 132 to 151 (TKRMESGAHDESETDSDYSE). Residues 7–20 (KSGPLSPSCSGGSS) are compositionally biased toward low complexity. Residues 35–56 (RSTRLRLQPLRKPKTSPKKKPV) show a composition bias toward basic residues. Positions 63 to 132 (PKKPATAFFF…EFHRAMTEYT (70 aa)) form a DNA-binding region, HMG box. The span at 132–142 (TKRMESGAHDE) shows a compositional bias: basic and acidic residues. Residue serine 150 is modified to Phosphoserine.

It belongs to the HMGB family.

It localises to the nucleus. The chain is High mobility group B protein 14 (HMGB14) from Arabidopsis thaliana (Mouse-ear cress).